The chain runs to 111 residues: Iron-sulfur cluster assembly protein CyaY (111 aa).

This sequence belongs to the frataxin family.

Its function is as follows. Involved in iron-sulfur (Fe-S) cluster assembly. May act as a regulator of Fe-S biogenesis. The protein is Iron-sulfur cluster assembly protein CyaY of Cupriavidus metallidurans (strain ATCC 43123 / DSM 2839 / NBRC 102507 / CH34) (Ralstonia metallidurans).